Consider the following 130-residue polypeptide: Cytidine deaminase (130 aa).

Residues 3 to 130 (VNLEWIIKQL…ELLMNGFKKS (128 aa)) form the CMP/dCMP-type deaminase domain. 43–45 (NIE) lines the substrate pocket. Cys54 contacts Zn(2+). Glu56 (proton donor) is an active-site residue. 2 residues coordinate Zn(2+): Cys88 and Cys91.

It belongs to the cytidine and deoxycytidylate deaminase family. Homodimer. Requires Zn(2+) as cofactor.

The catalysed reaction is cytidine + H2O + H(+) = uridine + NH4(+). The enzyme catalyses 2'-deoxycytidine + H2O + H(+) = 2'-deoxyuridine + NH4(+). Its function is as follows. This enzyme scavenges exogenous and endogenous cytidine and 2'-deoxycytidine for UMP synthesis. In Mycoplasma genitalium (strain ATCC 33530 / DSM 19775 / NCTC 10195 / G37) (Mycoplasmoides genitalium), this protein is Cytidine deaminase (cdd).